The sequence spans 78 residues: Major outer membrane lipoprotein Lpp 1 (78 aa).

The first 20 residues, Met-1 to Gly-20, serve as a signal peptide directing secretion. A lipid anchor (N-palmitoyl cysteine) is attached at Cys-21. Residue Cys-21 is the site of S-diacylglycerol cysteine attachment. 2 repeats span residues Asn-24 to Val-34 and Asn-38 to Val-48. Residues Ile-27–Lys-75 are a coiled coil. Residues Gln-56–Lys-78 are disordered. Positions Arg-68–Lys-78 are enriched in polar residues. Residue Lys-78 is modified to N6-murein peptidoglycan lysine.

The protein belongs to the Lpp family. As to quaternary structure, homotrimer.

Its subcellular location is the cell outer membrane. It is found in the secreted. The protein localises to the cell wall. A highly abundant outer membrane lipoprotein that controls the distance between the inner and outer membranes. The only protein known to be covalently linked to the peptidoglycan network (PGN). Also non-covalently binds the PGN. The link between the cell outer membrane and PGN contributes to maintenance of the structural and functional integrity of the cell envelope, and maintains the correct distance between the PGN and the outer membrane. The sequence is that of Major outer membrane lipoprotein Lpp 1 from Salmonella paratyphi A (strain ATCC 9150 / SARB42).